Reading from the N-terminus, the 222-residue chain is Pectate lyase A (222 aa).

Positions 1–25 (MKKMLTLLLSAGLVASIFGVMPAAA) are cleaved as a signal peptide.

It belongs to the polysaccharide lyase 3 family. Ca(2+) serves as cofactor.

The protein resides in the secreted. It carries out the reaction Eliminative cleavage of (1-&gt;4)-alpha-D-galacturonan to give oligosaccharides with 4-deoxy-alpha-D-galact-4-enuronosyl groups at their non-reducing ends.. It catalyses the reaction Eliminative cleavage of (1-&gt;4)-alpha-D-galacturonan methyl ester to give oligosaccharides with 4-deoxy-6-O-methyl-alpha-D-galact-4-enuronosyl groups at their non-reducing ends.. The protein operates within glycan metabolism; pectin degradation; 2-dehydro-3-deoxy-D-gluconate from pectin: step 2/5. Strongly inhibited by Ba(2+). To a lesser extent, is also inhibited by Sn(2+), Mg(2+) and Ag(+). Inhibited by EDTA in vitro. Catalyzes the depolymerization of both polygalacturonate and pectins of methyl esterification degree from 22 to 89%, with an endo mode of action. In contrast to the majority of pectate lyases, displays high activity on highly methylated pectins. Is not able to cleave trigalacturonate. Does not degrade xylans and carboxymethylcellulose (CMC). This Paenibacillus barcinonensis protein is Pectate lyase A (pelA).